The chain runs to 976 residues: MSVNDREDSSADLYNGQLLRDIKEVSKALYLTNGPQRPVLSLSPPVRSQSVSRTTEIGLVLSNKKKKSLVPWNWKKPLNAIAHFGQRRFDVCFLLHVHSIEGLPLNLDGTKLVVQWKRKDEVMTTQPSKVLQGTAEFEETLTHRCSVYGSKHGPHRSAKYQVKLFLIYVSPVDAPWLVLGKHWIDLTRILPLSLEEMEGTRSTRKWNTSFKLSGLAESAVLNLSFDYSVVTSSVCDSTSKNVMLRRVGSVPSMDHRSPPLDDGKVVNEVSPSLSLNLSQSIDFLYEKLGEQNPQRSTGTEVELGLETDKQAADSDDSGKGVETFQQERSGLEESNDPNTESSRIEIIDVHEILKDEDESVFEETYFIDQLSVAALKSEPSNLLPKHSVDGTPKSTFSSQVISESSESKSPSAMDDSTEKENFLEVKSSYKAAKISMTSLSLDDITESVANDFLNMLELEECSYVYTSDGEPTSPRESLLREFEKEAFASGNFLLDLNGEAEYVSDIDEKSNDFSFSASSLDVGENKREGKSQLLIDRRKAKVLEDLETETLLRECDFDDNSFDNSLCVCSDGFGSPIELPVDKGLDLLPLGDNIGPSVWTKGGGCIRSMNHLLFRESKEASQLIMQVSVPVVLVSELGSDILEILQIFAASGIEGLCSEVNALIPLEDIMGKTIHEVVDVTKFKRTGQDCSDKSKGVVVQKPPGQLHLCSSNEEFGSSMCPSNVPLEDVTSLAIDEIYILSIEGLKIQCSMSDQDPPSGIAPKPMDQSDALELIRFSLTLDEWLRLDQGMLENKDQDLASNGKGHTLRNKLTLALQVLLRDPSLNNEPIGASMLALIQVERSLDSPNSSLCSLAQEGRNKESFGYDTQLWRITEIGLAGLKIEPGADHPWCTKSQQQSGSRWLLANGTDKTIKCQASESKVIIVSNVQATRKRLDTLWSIISDRHHQEGDLSNSAASVPFTRNLDVIFSNEVTERS.

In terms of domain architecture, C2 NT-type spans isoleucine 81–valine 229. Positions lysine 309–lysine 319 are enriched in basic and acidic residues. 2 disordered regions span residues lysine 309–arginine 343 and asparagine 381–lysine 419. Positions serine 394–aspartate 414 are enriched in low complexity.

In terms of biological role, seems not necessary for chloroplast and nuclear photorelocation movements. The chain is Protein PLASTID MOVEMENT IMPAIRED 1-RELATED 2 from Arabidopsis thaliana (Mouse-ear cress).